Consider the following 396-residue polypeptide: Tryptophan synthase beta chain (396 aa).

K86 is modified (N6-(pyridoxal phosphate)lysine).

This sequence belongs to the TrpB family. As to quaternary structure, tetramer of two alpha and two beta chains. Pyridoxal 5'-phosphate is required as a cofactor.

It catalyses the reaction (1S,2R)-1-C-(indol-3-yl)glycerol 3-phosphate + L-serine = D-glyceraldehyde 3-phosphate + L-tryptophan + H2O. The protein operates within amino-acid biosynthesis; L-tryptophan biosynthesis; L-tryptophan from chorismate: step 5/5. The beta subunit is responsible for the synthesis of L-tryptophan from indole and L-serine. This is Tryptophan synthase beta chain from Vibrio atlanticus (strain LGP32) (Vibrio splendidus (strain Mel32)).